A 608-amino-acid polypeptide reads, in one-letter code: Albumin 2 (608 aa).

A signal peptide spans 1–14 (MQWLSVCSLLVLLS). Positions 15-18 (VLSR) are excised as a propeptide. Albumin domains follow at residues 19 to 205 (SQAQ…TFQH), 206 to 398 (AIAK…AGSD), and 402 to 600 (KITD…KLVS). 18 cysteine pairs are disulfide-bonded: Cys26/Cys72, Cys71/Cys80, Cys93/Cys108, Cys107/Cys118, Cys142/Cys187, Cys186/Cys195, Cys218/Cys264, Cys263/Cys271, Cys283/Cys299, Cys298/Cys309, Cys336/Cys381, Cys380/Cys389, Cys414/Cys460, Cys459/Cys471, Cys484/Cys500, Cys499/Cys510, Cys537/Cys582, and Cys581/Cys590. Asn501 is a glycosylation site (N-linked (GlcNAc...) asparagine).

It belongs to the ALB/AFP/VDB family. In terms of tissue distribution, plasma.

It localises to the secreted. Binds water, Ca(2+), Na(+), K(+), fatty acids, hormones, bilirubin and drugs. Its main function is the regulation of the colloidal osmotic pressure of blood. This Salmo salar (Atlantic salmon) protein is Albumin 2 (alb2).